Here is a 331-residue protein sequence, read N- to C-terminus: 7,8-didemethyl-8-hydroxy-5-deazariboflavin synthase (331 aa).

The region spanning 6–244 (ITFSKNAFLP…ADVAVQIPPN (239 aa)) is the Radical SAM core domain. [4Fe-4S] cluster-binding residues include cysteine 20, cysteine 24, and cysteine 27.

It belongs to the radical SAM superfamily. CofG family. In terms of assembly, consists of two subunits, CofG and CofH. Requires [4Fe-4S] cluster as cofactor.

It carries out the reaction 5-amino-5-(4-hydroxybenzyl)-6-(D-ribitylimino)-5,6-dihydrouracil + S-adenosyl-L-methionine = 7,8-didemethyl-8-hydroxy-5-deazariboflavin + 5'-deoxyadenosine + L-methionine + NH4(+) + H(+). Its pathway is cofactor biosynthesis; coenzyme F0 biosynthesis. Its function is as follows. Catalyzes the radical-mediated synthesis of 7,8-didemethyl-8-hydroxy-5-deazariboflavin from 5-amino-5-(4-hydroxybenzyl)-6-(D-ribitylimino)-5,6-dihydrouracil. The sequence is that of 7,8-didemethyl-8-hydroxy-5-deazariboflavin synthase from Methanoculleus marisnigri (strain ATCC 35101 / DSM 1498 / JR1).